A 424-amino-acid polypeptide reads, in one-letter code: Ubiquitin carboxyl-terminal hydrolase 12/46 homolog (424 aa).

A USP domain is found at 24–421; it reads FGLVNFGNTC…TGYILFYQSR (398 aa). Cys33 serves as the catalytic Nucleophile. Positions 131 to 189 are disordered; sequence NAGPSNGNPKATNQGGSTSAMASSIASKSSSTSNSNSNSNSTTNSNGNSSNSTGSLNAN. Residues 133 to 144 show a composition bias toward polar residues; it reads GPSNGNPKATNQ. Positions 145-189 are enriched in low complexity; that stretch reads GGSTSAMASSIASKSSSTSNSNSNSNSTTNSNGNSSNSTGSLNAN. Residue His369 is the Proton acceptor of the active site.

This sequence belongs to the peptidase C19 family. In terms of assembly, catalytic component of the Usp12-46 deubiquitylase complex consisting of Usp12-46, Wdr20 and Uaf1. The Usp12-46 deubiquitylase complex associates with arr/arrow; the interaction leads to deubiquitination and stabilization of arr/arrow.

The enzyme catalyses Thiol-dependent hydrolysis of ester, thioester, amide, peptide and isopeptide bonds formed by the C-terminal Gly of ubiquitin (a 76-residue protein attached to proteins as an intracellular targeting signal).. In terms of biological role, catalytic component of the Usp12-46 deubiquitylase complex. Deubiquitylates the wg/wingless-signaling receptor arr/arrow, which stabilizes the receptor and increases its concentration at the cell surface; this enhances the sensitivity of cells to wg/wingless-signal stimulation. This increases the amplitude and spatial range of the signaling response to the wg/wingless morphogen gradient, facilitating the precise, concentration-dependent regulation of its target genes. Required for wg/wingless-mediated signaling in the wing imaginal disc and for wg/wingless-dependent regulation of adult intestinal stem cell proliferation. Negative regulator of Notch signaling, possibly by regulating lysosomal degradation of N/Notch and affecting cell surface receptor levels; this may be context and cell-type specific function involved in external sensory organ development but not in wing imaginal-disc dorsoventral boundary signaling. Protects against HTT/huntingtin-induced polyglutamine expansion-dependent neurodegeneration. The chain is Ubiquitin carboxyl-terminal hydrolase 12/46 homolog from Drosophila melanogaster (Fruit fly).